The sequence spans 200 residues: dITP/XTP pyrophosphatase (200 aa).

7–12 serves as a coordination point for substrate; the sequence is TSNKHK. 2 residues coordinate Mg(2+): E38 and D73. D73 serves as the catalytic Proton acceptor. Substrate contacts are provided by residues S74, 154–157, K177, and 182–183; these read FGYD and HR.

It belongs to the HAM1 NTPase family. In terms of assembly, homodimer. It depends on Mg(2+) as a cofactor.

The catalysed reaction is XTP + H2O = XMP + diphosphate + H(+). The enzyme catalyses dITP + H2O = dIMP + diphosphate + H(+). It carries out the reaction ITP + H2O = IMP + diphosphate + H(+). Pyrophosphatase that catalyzes the hydrolysis of nucleoside triphosphates to their monophosphate derivatives, with a high preference for the non-canonical purine nucleotides XTP (xanthosine triphosphate), dITP (deoxyinosine triphosphate) and ITP. Seems to function as a house-cleaning enzyme that removes non-canonical purine nucleotides from the nucleotide pool, thus preventing their incorporation into DNA/RNA and avoiding chromosomal lesions. This is dITP/XTP pyrophosphatase from Campylobacter jejuni subsp. jejuni serotype O:2 (strain ATCC 700819 / NCTC 11168).